The following is a 379-amino-acid chain: ATP-sensitive inward rectifier potassium channel 10 (379 aa).

The Cytoplasmic segment spans residues 1–61; sequence MTSVAKVYYS…LKDLWTTFID (61 aa). Arg-36 contributes to the 1,2-dioctanoyl-sn-glycero-3-phospho-(1D-myo-inositol-4,5-bisphosphate) binding site. A helical transmembrane segment spans residues 62 to 88; the sequence is MQWRYKLLLFSATFAGTWFLFGVVWYL. Residues 89-114 are Extracellular-facing; the sequence is VAVAHGDLLELGPPANHTPCVVQVHT. Cys-108 and Cys-140 form a disulfide bridge. The segment at residues 115–131 is an intramembrane region (discontinuously helical; Pore-forming); the sequence is LTGAFLFSLESQTTIGY. The short motif at 128–133 is the Selectivity filter element; that stretch reads TIGYGF. The Extracellular segment spans residues 132 to 140; the sequence is GFRYISEEC. A helical transmembrane segment spans residues 141–166; that stretch reads PLAIVLLIAQLVLTTILEIFITGTFL. Residues 167–379 lie on the Cytoplasmic side of the membrane; that stretch reads AKIARPKKRA…SALSVRISNV (213 aa). 3 residues coordinate 1,2-dioctanoyl-sn-glycero-3-phospho-(1D-myo-inositol-4,5-bisphosphate): Lys-168, Arg-171, and Lys-173. Residue 210–217 participates in ATP binding; sequence GCQVTGKL.

The protein belongs to the inward rectifier-type potassium channel (TC 1.A.2.1) family. KCNJ10 subfamily. Homotetramer. In kidney cells, it forms heteromeric channels with Kir5.1/KCNJ16; this interaction is required for KCNJ16 localization to the basolateral membrane. Interacts with MAGI1, alone and possibly as a heteromer with KCNJ16; this interaction may facilitate KCNJ10/KCNJ16 potassium channel expression at the basolateral membrane in kidney cells. Interacts with PATJ. In terms of tissue distribution, predominantly expressed in the brain, including in glial cells of the cerebellum and forebrain. Expressed at lower levels in the kidney, and other peripheral tissues.

The protein localises to the membrane. The protein resides in the basolateral cell membrane. It catalyses the reaction K(+)(in) = K(+)(out). Its activity is regulated as follows. Channel activity is strongly regulated by variations of cytosolic pH; channels are activated by alkaline and inhibited by acidic pH values. Activated by phosphatidylinositol 4,5 biphosphate (PtdIns(4,5)P2). Inhibited by Ba(2+) and Cs(+). May be responsible for potassium buffering action of glial cells in the brain. Inward rectifier potassium channels are characterized by a greater tendency to allow potassium to flow into the cell rather than out of it. Their voltage dependence is regulated by the concentration of extracellular potassium; as external potassium is raised, the voltage range of the channel opening shifts to more positive voltages. The inward rectification is mainly due to the blockage of outward current by internal magnesium. Can be blocked by extracellular barium and cesium. In the kidney, together with KCNJ16, mediates basolateral K(+) recycling in distal tubules; this process is critical for Na(+) reabsorption at the tubules. This chain is ATP-sensitive inward rectifier potassium channel 10, found in Rattus norvegicus (Rat).